The chain runs to 388 residues: Succinate--CoA ligase [ADP-forming] subunit beta (388 aa).

An ATP-grasp domain is found at 9 to 244; the sequence is KQLFADYGLP…PSQEDPREAH (236 aa). ATP-binding positions include lysine 46, 53-55, glutamate 99, threonine 102, and glutamate 107; that span reads GRG. Mg(2+) is bound by residues asparagine 199 and aspartate 213. Residues asparagine 264 and 321 to 323 each bind substrate; that span reads GIV.

It belongs to the succinate/malate CoA ligase beta subunit family. In terms of assembly, heterotetramer of two alpha and two beta subunits. Requires Mg(2+) as cofactor.

It carries out the reaction succinate + ATP + CoA = succinyl-CoA + ADP + phosphate. It catalyses the reaction GTP + succinate + CoA = succinyl-CoA + GDP + phosphate. It functions in the pathway carbohydrate metabolism; tricarboxylic acid cycle; succinate from succinyl-CoA (ligase route): step 1/1. Its function is as follows. Succinyl-CoA synthetase functions in the citric acid cycle (TCA), coupling the hydrolysis of succinyl-CoA to the synthesis of either ATP or GTP and thus represents the only step of substrate-level phosphorylation in the TCA. The beta subunit provides nucleotide specificity of the enzyme and binds the substrate succinate, while the binding sites for coenzyme A and phosphate are found in the alpha subunit. This chain is Succinate--CoA ligase [ADP-forming] subunit beta, found in Hahella chejuensis (strain KCTC 2396).